The primary structure comprises 309 residues: Probable nitrogen assimilation transcriptional activator (309 aa).

An HTH lysR-type domain is found at 1-57 (MRLEQLQAALRVAETGSFQEAAQKVGCNQSTISRQVKGLEDELGIALFRRQGRMKLT). The H-T-H motif DNA-binding region spans 18 to 37 (FQEAAQKVGCNQSTISRQVK).

The protein belongs to the LysR transcriptional regulatory family.

Its function is as follows. Seems to regulate utilization of fixed nitrogen by controlling the expression of a certain gene(s) involved in nitrogen metabolism. This is Probable nitrogen assimilation transcriptional activator (ntcB) from Synechococcus elongatus (strain ATCC 33912 / PCC 7942 / FACHB-805) (Anacystis nidulans R2).